Consider the following 215-residue polypeptide: 3-dehydroquinate dehydratase (215 aa).

Residues 27 to 29 and arginine 54 each bind 3-dehydroquinate; that span reads ELR. The active-site Proton donor/acceptor is the histidine 112. The Schiff-base intermediate with substrate role is filled by lysine 139. 3-dehydroquinate is bound by residues arginine 176 and glutamine 198.

It belongs to the type-I 3-dehydroquinase family. Homodimer.

The catalysed reaction is 3-dehydroquinate = 3-dehydroshikimate + H2O. It participates in metabolic intermediate biosynthesis; chorismate biosynthesis; chorismate from D-erythrose 4-phosphate and phosphoenolpyruvate: step 3/7. Involved in the third step of the chorismate pathway, which leads to the biosynthesis of aromatic amino acids. Catalyzes the cis-dehydration of 3-dehydroquinate (DHQ) and introduces the first double bond of the aromatic ring to yield 3-dehydroshikimate. This is 3-dehydroquinate dehydratase from Pyrococcus abyssi (strain GE5 / Orsay).